A 68-amino-acid chain; its full sequence is MKAQLCILLIALVLFQTFSQSDAILSAIWSGIKSLFGRRGLNDLDDLDELFDGEISQADVDFLNELMR.

An N-terminal signal peptide occupies residues 1 to 23 (MKAQLCILLIALVLFQTFSQSDA). At Phe-36 the chain carries Phenylalanine amide. Residues 38–68 (RRGLNDLDDLDELFDGEISQADVDFLNELMR) constitute a propeptide that is removed on maturation.

The protein belongs to the non-disulfide-bridged peptide (NDBP) superfamily. Short antimicrobial peptide (group 4) family. In terms of tissue distribution, expressed by the venom gland.

It is found in the secreted. Its subcellular location is the target cell membrane. Its function is as follows. Antimicrobial peptide. Inhibits the growth of Gram-positive and Gram-negative bacteria. Shows antifungal activity with MIC values ranging from 12.5 to 25 uM. Also shows an inhibitory activity on C.albicans biofilms at high concentrations. Shows low cytotoxic activity and has weak hemolytic activity. The chain is Amphipathic peptide OcyC1 from Opisthacanthus cayaporum (South American scorpion).